The chain runs to 158 residues: SsrA-binding protein (158 aa).

The protein belongs to the SmpB family.

It is found in the cytoplasm. Functionally, required for rescue of stalled ribosomes mediated by trans-translation. Binds to transfer-messenger RNA (tmRNA), required for stable association of tmRNA with ribosomes. tmRNA and SmpB together mimic tRNA shape, replacing the anticodon stem-loop with SmpB. tmRNA is encoded by the ssrA gene; the 2 termini fold to resemble tRNA(Ala) and it encodes a 'tag peptide', a short internal open reading frame. During trans-translation Ala-aminoacylated tmRNA acts like a tRNA, entering the A-site of stalled ribosomes, displacing the stalled mRNA. The ribosome then switches to translate the ORF on the tmRNA; the nascent peptide is terminated with the 'tag peptide' encoded by the tmRNA and targeted for degradation. The ribosome is freed to recommence translation, which seems to be the essential function of trans-translation. This is SsrA-binding protein from Psychrobacter sp. (strain PRwf-1).